The following is a 124-amino-acid chain: Small ribosomal subunit protein bS6 (124 aa).

This sequence belongs to the bacterial ribosomal protein bS6 family.

Binds together with bS18 to 16S ribosomal RNA. The chain is Small ribosomal subunit protein bS6 from Haemophilus ducreyi (strain 35000HP / ATCC 700724).